Reading from the N-terminus, the 576-residue chain is MDEMVLLTQEWLNETYKGKSGYNSIEENGKTGWKTMYALTRALQLELGITQTSDSFGPTTLRKLKELGPISTSTNSKKNIVKIIQGALYCKGYGPGGLTGTFGQGTKEAIAEMQLHMGLSKTDGVVTPKVFKALLNMDSYILLNGASEKVRSIQQWLNNKYYNRENFYFMPCDGLYSRDTQKSLVYAIQYEEGLSDSIANGNFGPTTQRLIPVLRIGETDEKNSFIHLFQAALIFNGYNVPFDGVYSESVRSKVKAFQSFAKLQQSGTADFQTWASLLVSTGDPNRKGVACDSITQITSDRAESLKRAGYKIVGRYLTNAPGSTLNKKIQPGELETILKSGLNVFPIYQTYGGATNYFNKEQGKKDAFAAYKAAKEYGFKNNTVIYFAVDYDAYGNDLNNNIIPHFEGINEIMNGFLGSTYKIGIYAPRNVCTIVSKKGLAFASFVSGMSTGFSGNLGYPLPYNWAFDQISTITVGNGSGMIEIDNDICSGLDNGVNTINIVPSENKKFFDQIDVLYETAEKYAQMQSDLNNGVKKTQLANELVAQYLRKDDYKGWKWVPTAGQIDPIYREWAVKR.

This sequence belongs to the FadG family.

This is an uncharacterized protein from Bacillus subtilis (strain 168).